A 394-amino-acid chain; its full sequence is MGCLGDSKTEDQRNEEKAQREANKKIEKQLQKDKQVYRATHRLLLLGAGESGKSTIVKQMRILHVNGFNGEGGEEDPQAARSNSDGEKATKVQDIKNNLKEAIETIVAAMSNLVPPVELANPENQFRVDYILSVMNVPNFDFPPEFYEHAKALWEDEGVRACYERSNEYQLIDCAQYFLDKIDVIKQADYVPSDQDLLRCRVLTSGIFETKFQVDKVNFHMFDVGGQRDERRKWIQCFNDVTAIIFVVASSSYNMVIREDNQTNRLQEALNLFKSIWNNRWLRTISVILFLNKQDLLAEKVLAGKSKIEDYFPEFARYTTPEDATPEPGEDPRVTRAKYFIRDEFLRISTASGDGRHYCYPHFTCAVDTENIRRVFNDCRDIIQRMHLRQYELL.

A disordered region spans residues 1 to 25 (MGCLGDSKTEDQRNEEKAQREANKK). Residue Gly-2 is the site of N-palmitoyl glycine attachment. A lipid anchor (S-palmitoyl cysteine) is attached at Cys-3. A compositionally biased stretch (basic and acidic residues) spans 7–25 (SKTEDQRNEEKAQREANKK). One can recognise a G-alpha domain in the interval 39 to 394 (ATHRLLLLGA…RMHLRQYELL (356 aa)). The G1 motif stretch occupies residues 42–55 (RLLLLGAGESGKST). 47–55 (GAGESGKST) lines the GTP pocket. Position 54 (Ser-54) interacts with Mg(2+). Residues 68-90 (FNGEGGEEDPQAARSNSDGEKAT) form a disordered region. The segment at 196-204 (DLLRCRVLT) is G2 motif. Residues 197 to 204 (LLRCRVLT), 223 to 227 (DVGGQ), 292 to 295 (NKQD), and Ala-366 contribute to the GTP site. Position 204 (Thr-204) interacts with Mg(2+). The interval 219–228 (FHMFDVGGQR) is G3 motif. Positions 288-295 (ILFLNKQD) are G4 motif. Residues 364–369 (TCAVDT) are G5 motif.

The protein belongs to the G-alpha family. G(s) subfamily. As to quaternary structure, heterotrimeric G proteins are composed of 3 units; alpha, beta and gamma. The alpha chain contains the guanine nucleotide binding site. Interacts with CRY1; the interaction may block GPCR-mediated regulation of cAMP concentrations. Interacts with ADCY6 and stimulates its adenylyl cyclase activity. Interacts with ADCY2 and ADCY5. Stimulates the ADCY5 adenylyl cyclase activity. Interaction with SASH1.

It is found in the cell membrane. Its function is as follows. Guanine nucleotide-binding proteins (G proteins) function as transducers in numerous signaling pathways controlled by G protein-coupled receptors (GPCRs). Signaling involves the activation of adenylyl cyclases, resulting in increased levels of the signaling molecule cAMP. GNAS functions downstream of several GPCRs, including beta-adrenergic receptors. Stimulates the Ras signaling pathway via RAPGEF2. The chain is Guanine nucleotide-binding protein G(s) subunit alpha (GNAS) from Cricetulus longicaudatus (Long-tailed dwarf hamster).